The chain runs to 1555 residues: MGCKGDASGACAAGALPVTGVCYKMGVLVVLTVLWLFSSVKADSKAITTSLTTKWFSTPLLLEASEFLAEDSQEKFWNFVEASQNIGSSDHDGTDYSYYHAILEAAFQFLSPLQQNLFKFCLSLRSYSATIQAFQQIAADEPPPEGCNSFFSVHGKKTCESDTLEALLLTASERPKPLLFKGDHRYPSSNPESPVVIFYSEIGSEEFSNFHRQLISKSNAGKINYVFRHYIFNPRKEPVYLSGYGVELAIKSTEYKAKDDTQVKGTEVNTTVIGENDPIDEVQGFLFGKLRDLHPDLEGQLKELRKHLVESTNEMAPLKVWQLQDLSFQTAARILASPVELALVVMKDLSQNFPTKARAITKTAVSSELRTEVEENQKYFKGTLGLQPGDSALFINGLHMDLDTQDIFSLFDVLRNEARVMEGLHRLGIEGLSLHNVLKLNIQPSEADYAVDIRSPAISWVNNLEVDSRYNSWPSSLQELLRPTFPGVIRQIRKNLHNMVFIVDPAHETTAELMNTAEMFLSNHIPLRIGFIFVVNDSEDVDGMQDAGVAVLRAYNYVAQEVDDYHAFQTLTHIYNKVRTGEKVKVEHVVSVLEKKYPYVEVNSILGIDSAYDRNRKEARGYYEQTGVGPLPVVLFNGMPFEREQLDPDELETITMHKILETTTFFQRAVYLGELPHDQDVVEYIMNQPNVVPRINSRILTAERDYLDLTASNNFFVDDYARFTILDSQGKTAAVANSMNYLTKKGMSSKEIYDDSFIRPVTFWIVGDFDSPSGRQLLYDAIKHQKSSNNVRISMINNPAKEISYENTQISRAIWAALQTQTSNAAKNFITKMAKEGAAEALAAGADIAEFSVGGMDFSLFKEVFESSKMDFILSHAVYCRDVLKLKKGQRAVISNGRIIGPLEDSELFNQDDFHLLENIILKTSGQKIKSHIQQLRVEEDVASDLVMKVDALLSAQPKGDPRIEYQFFEDRHSAIKLRPKEGETYFDVVAVVDPVTREAQRLAPLLLVLAQLINMNLRVFMNCQSKLSDMPLKSFYRYVLEPEISFTSDNSFAKGPIAKFLDMPQSPLFTLNLNTPESWMVESVRTPYDLDNIYLEEVDSVVAAEYELEYLLLEGHCYDITTGQPPRGLQFTLGTSANPVIVDTIVMANLGYFQLKANPGAWILRLRKGRSEDIYRIYSHDGTDSPPDADEVVIVLNNFKSKIIKVKVQKKADMVNEDLLSDGTSENESGFWDSFKWGFTGQKTEEVKQDKDDIINIFSVASGHLYERFLRIMMLSVLKNTKTPVKFWFLKNYLSPTFKEFIPYMANEYNFQYELVQYKWPRWLHQQTEKQRIIWGYKILFLDVLFPLVVDKFLFVDADQIVRTDLKELRDFNLDGAPYGYTPFCDSRREMDGYRFWKSGYWASHLAGRKYHISALYVVDLKKFRKIAAGDRLRGQYQGLSQDPNSLSNLDQDLPNNMIHQVPIKSLPQEWLWCETWCDDASKKRAKTIDLCNNPMTKEPKLEAAVRIVPEWQDYDQEIKQLQIRFQKEKETGALYKEKTKEPSREGPQKREEL.

Positions 1–42 (MGCKGDASGACAAGALPVTGVCYKMGVLVVLTVLWLFSSVKA) are cleaved as a signal peptide. Residues Asn-536 and Asn-1228 are each glycosylated (N-linked (GlcNAc...) asparagine). Residues 1244–1555 (KTEEVKQDKD…REGPQKREEL (312 aa)) are glucosyltransferase. A Phosphoserine modification is found at Ser-1277. The tract at residues 1534–1555 (GALYKEKTKEPSREGPQKREEL) is disordered. The Prevents secretion from ER motif lies at 1552–1555 (REEL).

Belongs to the glycosyltransferase 8 family. As to quaternary structure, monomer as well as in a tight complex with SELENOF. Interacts with METTL23. Part of a large chaperone multiprotein complex comprising DNAJB11, HSP90B1, HSPA5, HYOU, PDIA2, PDIA4, PDIA6, PPIB, SDF2L1, UGGT1 and very small amounts of ERP29, but not, or at very low levels, CALR nor CANX. Ca(2+) is required as a cofactor. Mn(2+) serves as cofactor. In terms of tissue distribution, higher levels in pancreas, skeletal muscle, kidney, and brain. Low levels in lung and heart.

It localises to the endoplasmic reticulum lumen. Its subcellular location is the endoplasmic reticulum-Golgi intermediate compartment. It carries out the reaction N(4)-(alpha-D-Man-(1-&gt;2)-alpha-D-Man-(1-&gt;2)-alpha-D-Man-(1-&gt;3)-[alpha-D-Man-(1-&gt;2)-alpha-D-Man-(1-&gt;3)-[alpha-D-Man-(1-&gt;2)-alpha-D-Man-(1-&gt;6)]-alpha-D-Man-(1-&gt;6)]-beta-D-Man-(1-&gt;4)-beta-D-GlcNAc-(1-&gt;4)-beta-D-GlcNAc)-L-asparaginyl-[protein] (N-glucan mannose isomer 9A1,2,3B1,2,3) + UDP-alpha-D-glucose = N(4)-(alpha-D-Glc-(1-&gt;3)-alpha-D-Man-(1-&gt;2)-alpha-D-Man-(1-&gt;2)-alpha-D-Man-(1-&gt;3)-[alpha-D-Man-(1-&gt;2)-alpha-D-Man-(1-&gt;3)-[alpha-D-Man-(1-&gt;2)-alpha-D-Man-(1-&gt;6)]-alpha-D-Man-(1-&gt;6)]-beta-D-Man-(1-&gt;4)-beta-D-GlcNAc-(1-&gt;4)-beta-D-GlcNAc)-L-asparaginyl-[protein] + UDP + H(+). The protein operates within protein modification; protein glycosylation. With respect to regulation, catalytic activity is enhanced by complex formation with SELENOF. In terms of biological role, recognizes glycoproteins with minor folding defects. Reglucosylates single N-glycans near the misfolded part of the protein, thus providing quality control for protein folding in the endoplasmic reticulum. Reglucosylated proteins are recognized by calreticulin for recycling to the endoplasmic reticulum and refolding or degradation. This chain is UDP-glucose:glycoprotein glucosyltransferase 1 (UGGT1), found in Homo sapiens (Human).